A 186-amino-acid chain; its full sequence is Threonylcarbamoyl-AMP synthase (186 aa).

The YrdC-like domain maps to 6-186 (GFRLRLAANA…FDAMSGRRIR (181 aa)).

Belongs to the SUA5 family. TsaC subfamily.

Its subcellular location is the cytoplasm. The catalysed reaction is L-threonine + hydrogencarbonate + ATP = L-threonylcarbamoyladenylate + diphosphate + H2O. Functionally, required for the formation of a threonylcarbamoyl group on adenosine at position 37 (t(6)A37) in tRNAs that read codons beginning with adenine. Catalyzes the conversion of L-threonine, HCO(3)(-)/CO(2) and ATP to give threonylcarbamoyl-AMP (TC-AMP) as the acyladenylate intermediate, with the release of diphosphate. The chain is Threonylcarbamoyl-AMP synthase from Methylococcus capsulatus (strain ATCC 33009 / NCIMB 11132 / Bath).